Reading from the N-terminus, the 363-residue chain is Probable endopolygalacturonase A (363 aa).

The first 20 residues, 1–20, serve as a signal peptide directing secretion; sequence MQLLQSSVIAATVGAALVAA. Residues 21–28 constitute a propeptide that is removed on maturation; it reads APVELEAR. Cys-31 and Cys-46 are oxidised to a cystine. PbH1 repeat units lie at residues 158-187, 188-209, 210-230, 239-260, 268-290, and 302-347; these read SDNL…DIGS, STYI…AINS, GSHI…SIGS, VEDV…RIKT, VSNV…VVEQ, and TNGI…SITG. Asn-162 is a glycosylation site (N-linked (GlcNAc...) asparagine). The Proton donor role is filled by Asp-202. A disulfide bond links Cys-204 and Cys-220. Residue His-224 is part of the active site. Disulfide bonds link Cys-330–Cys-335 and Cys-354–Cys-363.

This sequence belongs to the glycosyl hydrolase 28 family.

The protein resides in the secreted. It carries out the reaction (1,4-alpha-D-galacturonosyl)n+m + H2O = (1,4-alpha-D-galacturonosyl)n + (1,4-alpha-D-galacturonosyl)m.. In terms of biological role, involved in maceration and soft-rotting of plant tissue. Hydrolyzes the 1,4-alpha glycosidic bonds of de-esterified pectate in the smooth region of the plant cell wall. This is Probable endopolygalacturonase A (pgaA) from Aspergillus parasiticus.